The sequence spans 156 residues: Cytochrome c-type biogenesis protein CcmE 2 (156 aa).

Residues 1–8 are Cytoplasmic-facing; that stretch reads MNPQRRRR. Residues 9-29 traverse the membrane as a helical; Signal-anchor for type II membrane protein segment; the sequence is LWWVLALLLAGGLATTLVSMA. Residues 30 to 156 lie on the Periplasmic side of the membrane; sequence LQRNVAYLYT…AAANQGGALR (127 aa). Heme-binding residues include histidine 123 and tyrosine 127. Residues 135–156 form a disordered region; it reads KMGSAHRKHDVPAAANQGGALR.

Belongs to the CcmE/CycJ family.

Its subcellular location is the cell inner membrane. In terms of biological role, heme chaperone required for the biogenesis of c-type cytochromes. Transiently binds heme delivered by CcmC and transfers the heme to apo-cytochromes in a process facilitated by CcmF and CcmH. In Xanthomonas oryzae pv. oryzae (strain MAFF 311018), this protein is Cytochrome c-type biogenesis protein CcmE 2.